A 298-amino-acid chain; its full sequence is GTP-binding protein REM 1 (298 aa).

The interval 1 to 73 (MTLNTEQEAK…DDWSSESSDS (73 aa)) is disordered. Residues 35–55 (TVPSTQSQHPRLGQSASLNPP) are compositionally biased toward polar residues. The residue at position 51 (serine 51) is a Phosphoserine. The segment covering 63 to 73 (PDDWSSESSDS) has biased composition (low complexity). Residues 87 to 94 (GDPGVGKT) and 195 to 198 (NKAD) contribute to the GTP site. A calmodulin-binding region spans residues 268 to 287 (ARRFLARLTARSARRRALKA).

It belongs to the small GTPase superfamily. RGK family. As to quaternary structure, in vitro, interacts with calmodulin in a calcium-dependent manner. As to expression, most highly expressed in the endothelial lining of the blood vessels in uterus and heart. Lower levels found in spleen, lymph node, kidney and testis. Also found in cells with secretory function such as the islets of Langerhans, lobule/duct epithelium in the breast, bile duct epithelium in the liver, surface epithelium in the endometrial glands of the uterus, colon mucosa and acinar cells in the pancreas and the prostate.

Promotes endothelial cell sprouting and actin cytoskeletal reorganization. May be involved in angiogenesis. May function in Ca(2+) signaling. This is GTP-binding protein REM 1 (REM1) from Homo sapiens (Human).